We begin with the raw amino-acid sequence, 252 residues long: Imidazole glycerol phosphate synthase subunit HisF (252 aa).

Residues aspartate 11 and aspartate 130 contribute to the active site.

This sequence belongs to the HisA/HisF family. As to quaternary structure, heterodimer of HisH and HisF.

It is found in the cytoplasm. It catalyses the reaction 5-[(5-phospho-1-deoxy-D-ribulos-1-ylimino)methylamino]-1-(5-phospho-beta-D-ribosyl)imidazole-4-carboxamide + L-glutamine = D-erythro-1-(imidazol-4-yl)glycerol 3-phosphate + 5-amino-1-(5-phospho-beta-D-ribosyl)imidazole-4-carboxamide + L-glutamate + H(+). The protein operates within amino-acid biosynthesis; L-histidine biosynthesis; L-histidine from 5-phospho-alpha-D-ribose 1-diphosphate: step 5/9. Its function is as follows. IGPS catalyzes the conversion of PRFAR and glutamine to IGP, AICAR and glutamate. The HisF subunit catalyzes the cyclization activity that produces IGP and AICAR from PRFAR using the ammonia provided by the HisH subunit. This chain is Imidazole glycerol phosphate synthase subunit HisF, found in Acinetobacter baylyi (strain ATCC 33305 / BD413 / ADP1).